The sequence spans 353 residues: uncharacterized protein (353 aa).

Positions 1 to 30 (MHLRHLFSSRLRGSLLLGSLLVVSSFSTQA) are cleaved as a signal peptide.

In terms of assembly, monomer.

This is an uncharacterized protein from Escherichia coli (strain K12).